A 140-amino-acid chain; its full sequence is Small ribosomal subunit protein uS12 (140 aa).

3-methylthioaspartic acid is present on Asp-102.

It belongs to the universal ribosomal protein uS12 family. In terms of assembly, part of the 30S ribosomal subunit. Contacts proteins S8 and S17. May interact with IF1 in the 30S initiation complex.

In terms of biological role, with S4 and S5 plays an important role in translational accuracy. Functionally, interacts with and stabilizes bases of the 16S rRNA that are involved in tRNA selection in the A site and with the mRNA backbone. Located at the interface of the 30S and 50S subunits, it traverses the body of the 30S subunit contacting proteins on the other side and probably holding the rRNA structure together. The combined cluster of proteins S8, S12 and S17 appears to hold together the shoulder and platform of the 30S subunit. This chain is Small ribosomal subunit protein uS12, found in Bacillus cereus (strain G9842).